Consider the following 520-residue polypeptide: Phospholipase C A (520 aa).

A signal peptide (tat-type signal) is located at residues 1–38 (MSASPLLGMSRREFLTKLTGAGAAAFLMDWAAPVIEKA).

It belongs to the bacterial phospholipase C family. Predicted to be exported by the Tat system. The position of the signal peptide cleavage has not been experimentally proven.

Its subcellular location is the secreted. It localises to the cell wall. The catalysed reaction is a 1,2-diacyl-sn-glycero-3-phosphocholine + H2O = phosphocholine + a 1,2-diacyl-sn-glycerol + H(+). In terms of biological role, involved in virulence. Induces cytotoxic effects on mouse macrophage cell lines, via direct or indirect enzymatic hydrolysis of cell membrane phospholipids. Hydrolyzes phosphatidylcholine. This Mycobacterium tuberculosis (strain CDC 1551 / Oshkosh) protein is Phospholipase C A.